A 227-amino-acid chain; its full sequence is UPF0758 protein Pcryo_2119 (227 aa).

The region spanning 102–224 is the MPN domain; that stretch reads GLGRSQMVKD…TLSYAENSLP (123 aa). Zn(2+) is bound by residues His173, His175, and Asp186. Residues 173 to 186 carry the JAMM motif motif; that stretch reads HNHPHTDAKPSTAD.

It belongs to the UPF0758 family.

This is UPF0758 protein Pcryo_2119 from Psychrobacter cryohalolentis (strain ATCC BAA-1226 / DSM 17306 / VKM B-2378 / K5).